The sequence spans 237 residues: Orotidine 5'-phosphate decarboxylase (237 aa).

Substrate is bound by residues Asp17, Lys39, 66–75 (DLKLHDIGNT), Thr121, Arg182, Gln191, Gly211, and Arg212. Lys68 functions as the Proton donor in the catalytic mechanism.

Belongs to the OMP decarboxylase family. Type 1 subfamily. As to quaternary structure, homodimer.

The catalysed reaction is orotidine 5'-phosphate + H(+) = UMP + CO2. Its pathway is pyrimidine metabolism; UMP biosynthesis via de novo pathway; UMP from orotate: step 2/2. In terms of biological role, catalyzes the decarboxylation of orotidine 5'-monophosphate (OMP) to uridine 5'-monophosphate (UMP). This chain is Orotidine 5'-phosphate decarboxylase, found in Bradyrhizobium diazoefficiens (strain JCM 10833 / BCRC 13528 / IAM 13628 / NBRC 14792 / USDA 110).